A 154-amino-acid polypeptide reads, in one-letter code: TSET complex member tstD (154 aa).

This sequence belongs to the adaptor complexes small subunit family. Component of the TSET complex, a heterohexamer composed of tstA, tstB, tstC, tstD, tstE and tstF, which may act in plasma membrane turnover. tstA, tstB, tstC and tstD are likely to be the core complex members with tstE and tstF acting as associated scaffold proteins.

It localises to the cell membrane. The protein resides in the cytoplasm. This Dictyostelium discoideum (Social amoeba) protein is TSET complex member tstD.